Here is a 191-residue protein sequence, read N- to C-terminus: Fe/S biogenesis protein NfuA (191 aa).

Cysteine 149 and cysteine 152 together coordinate [4Fe-4S] cluster.

It belongs to the NfuA family. In terms of assembly, homodimer. It depends on [4Fe-4S] cluster as a cofactor.

Involved in iron-sulfur cluster biogenesis. Binds a 4Fe-4S cluster, can transfer this cluster to apoproteins, and thereby intervenes in the maturation of Fe/S proteins. Could also act as a scaffold/chaperone for damaged Fe/S proteins. The polypeptide is Fe/S biogenesis protein NfuA (Pectobacterium carotovorum subsp. carotovorum (strain PC1)).